The primary structure comprises 60 residues: Large ribosomal subunit protein bL32B (60 aa).

Over residues 1–19 (MAVPKRKMSRANTRHRRSQ) the composition is skewed to basic residues. Positions 1-20 (MAVPKRKMSRANTRHRRSQW) are disordered.

Belongs to the bacterial ribosomal protein bL32 family.

This Saccharopolyspora erythraea (strain ATCC 11635 / DSM 40517 / JCM 4748 / NBRC 13426 / NCIMB 8594 / NRRL 2338) protein is Large ribosomal subunit protein bL32B.